Consider the following 156-residue polypeptide: Cyclic pyranopterin monophosphate synthase (156 aa).

Substrate contacts are provided by residues 73–75 (LCH) and 110–111 (ME). Aspartate 125 is an active-site residue.

Belongs to the MoaC family. In terms of assembly, homohexamer; trimer of dimers.

It carries out the reaction (8S)-3',8-cyclo-7,8-dihydroguanosine 5'-triphosphate = cyclic pyranopterin phosphate + diphosphate. Its pathway is cofactor biosynthesis; molybdopterin biosynthesis. In terms of biological role, catalyzes the conversion of (8S)-3',8-cyclo-7,8-dihydroguanosine 5'-triphosphate to cyclic pyranopterin monophosphate (cPMP). The sequence is that of Cyclic pyranopterin monophosphate synthase from Pseudomonas putida (strain W619).